A 63-amino-acid chain; its full sequence is Large ribosomal subunit protein uL29 (63 aa).

It belongs to the universal ribosomal protein uL29 family.

The sequence is that of Large ribosomal subunit protein uL29 from Bordetella petrii (strain ATCC BAA-461 / DSM 12804 / CCUG 43448).